The chain runs to 162 residues: Peptidyl-prolyl cis-trans isomerase (162 aa).

The region spanning 5 to 161 is the PPIase cyclophilin-type domain; the sequence is FFDVQFGGDA…TTIKIVDSGV (157 aa).

Belongs to the cyclophilin-type PPIase family. PPIase A subfamily.

It carries out the reaction [protein]-peptidylproline (omega=180) = [protein]-peptidylproline (omega=0). Its activity is regulated as follows. Binds cyclosporin A (CsA). CsA mediates some of its effects via an inhibitory action on PPIase. Functionally, PPIases accelerate the folding of proteins. It catalyzes the cis-trans isomerization of proline imidic peptide bonds in oligopeptides. This Paramecium primaurelia protein is Peptidyl-prolyl cis-trans isomerase.